We begin with the raw amino-acid sequence, 269 residues long: Shikimate dehydrogenase (NADP(+)) (269 aa).

Residues 22–24 (TLS) and Thr-68 each bind shikimate. The active-site Proton acceptor is the Lys-72. Positions 93 and 104 each coordinate shikimate. Residues 128-132 (GAGGA), 152-157 (NRTNLR), and Phe-210 each bind NADP(+). Tyr-212 contributes to the shikimate binding site. Gly-233 is a binding site for NADP(+).

This sequence belongs to the shikimate dehydrogenase family. Homodimer.

It catalyses the reaction shikimate + NADP(+) = 3-dehydroshikimate + NADPH + H(+). Its pathway is metabolic intermediate biosynthesis; chorismate biosynthesis; chorismate from D-erythrose 4-phosphate and phosphoenolpyruvate: step 4/7. Involved in the biosynthesis of the chorismate, which leads to the biosynthesis of aromatic amino acids. Catalyzes the reversible NADPH linked reduction of 3-dehydroshikimate (DHSA) to yield shikimate (SA). This is Shikimate dehydrogenase (NADP(+)) from Saccharolobus islandicus (strain Y.N.15.51 / Yellowstone #2) (Sulfolobus islandicus).